A 300-amino-acid chain; its full sequence is tRNA-cytidine(32) 2-sulfurtransferase (300 aa).

The PP-loop motif signature appears at 41–46; that stretch reads SGGKDS. Cys116, Cys119, and Cys207 together coordinate [4Fe-4S] cluster.

Belongs to the TtcA family. In terms of assembly, homodimer. Requires Mg(2+) as cofactor. [4Fe-4S] cluster is required as a cofactor.

It is found in the cytoplasm. It catalyses the reaction cytidine(32) in tRNA + S-sulfanyl-L-cysteinyl-[cysteine desulfurase] + AH2 + ATP = 2-thiocytidine(32) in tRNA + L-cysteinyl-[cysteine desulfurase] + A + AMP + diphosphate + H(+). It participates in tRNA modification. Its function is as follows. Catalyzes the ATP-dependent 2-thiolation of cytidine in position 32 of tRNA, to form 2-thiocytidine (s(2)C32). The sulfur atoms are provided by the cysteine/cysteine desulfurase (IscS) system. In Idiomarina loihiensis (strain ATCC BAA-735 / DSM 15497 / L2-TR), this protein is tRNA-cytidine(32) 2-sulfurtransferase.